A 146-amino-acid polypeptide reads, in one-letter code: Prefoldin subunit alpha (146 aa).

Belongs to the prefoldin alpha subunit family. Heterohexamer of two alpha and four beta subunits.

The protein localises to the cytoplasm. Molecular chaperone capable of stabilizing a range of proteins. Seems to fulfill an ATP-independent, HSP70-like function in archaeal de novo protein folding. This is Prefoldin subunit alpha from Methanococcus vannielii (strain ATCC 35089 / DSM 1224 / JCM 13029 / OCM 148 / SB).